The primary structure comprises 409 residues: Elongation factor Tu, chloroplastic (409 aa).

Residues 10–214 (KPHVNIGTIG…AVDTYIPTPE (205 aa)) form the tr-type G domain. Residues 19-26 (GHVDHGKT) form a G1 region. 19-26 (GHVDHGKT) is a binding site for GTP. Residue T26 coordinates Mg(2+). The segment at 60–64 (GITIN) is G2. The tract at residues 81 to 84 (DCPG) is G3. GTP contacts are provided by residues 81 to 85 (DCPGH) and 136 to 139 (NKED). Residues 136–139 (NKED) form a G4 region. The tract at residues 174–176 (SAL) is G5.

The protein belongs to the TRAFAC class translation factor GTPase superfamily. Classic translation factor GTPase family. EF-Tu/EF-1A subfamily.

It localises to the plastid. The protein resides in the chloroplast. It carries out the reaction GTP + H2O = GDP + phosphate + H(+). Functionally, GTP hydrolase that promotes the GTP-dependent binding of aminoacyl-tRNA to the A-site of ribosomes during protein biosynthesis. The protein is Elongation factor Tu, chloroplastic (tufA) of Pyropia yezoensis (Susabi-nori).